The following is a 295-amino-acid chain: MTETASTRASFVIGDEAAARRVTDLLGESFDDGELAIAAFERPDRSWEVSLHFGEMPNLDGVRALVAQAAGDAAAAAMTVESIAAKDWVAASLEGLVPVPAGRFVVHGSHDRARIPSNKLGIEIEAALAFGTGHHGTTRGCLTLLDLVLRAGPPRSVLDLGTGTGVLAIAAAKALRQPVLATDIDRQSVAVAKENARLNGVGNLVEAVHATGFSAPVFAAWGPFDLVLANILANPLRQLSTPMSQHLAPSALVILSGLLQPQAQSVIAAYRARGCVLLRQIVIEGWSSLLLAKTF.

S-adenosyl-L-methionine-binding residues include Thr-138, Gly-161, Asp-183, and Asn-230.

It belongs to the methyltransferase superfamily. PrmA family.

It is found in the cytoplasm. It catalyses the reaction L-lysyl-[protein] + 3 S-adenosyl-L-methionine = N(6),N(6),N(6)-trimethyl-L-lysyl-[protein] + 3 S-adenosyl-L-homocysteine + 3 H(+). Its function is as follows. Methylates ribosomal protein L11. This Rhodopseudomonas palustris (strain BisB5) protein is Ribosomal protein L11 methyltransferase.